A 446-amino-acid chain; its full sequence is N-succinylarginine dihydrolase (446 aa).

Substrate contacts are provided by residues 19 to 28 (AGLSFGNVAS), N110, and 137 to 138 (HR). Residue E174 is part of the active site. Substrate is bound at residue R213. H249 is a catalytic residue. Residues D251 and N364 each coordinate substrate. C370 serves as the catalytic Nucleophile.

It belongs to the succinylarginine dihydrolase family. In terms of assembly, homodimer.

It carries out the reaction N(2)-succinyl-L-arginine + 2 H2O + 2 H(+) = N(2)-succinyl-L-ornithine + 2 NH4(+) + CO2. Its pathway is amino-acid degradation; L-arginine degradation via AST pathway; L-glutamate and succinate from L-arginine: step 2/5. In terms of biological role, catalyzes the hydrolysis of N(2)-succinylarginine into N(2)-succinylornithine, ammonia and CO(2). This Burkholderia pseudomallei (strain 668) protein is N-succinylarginine dihydrolase.